The primary structure comprises 94 residues: Co-chaperonin GroES (94 aa).

This sequence belongs to the GroES chaperonin family. In terms of assembly, heptamer of 7 subunits arranged in a ring. Interacts with the chaperonin GroEL.

It is found in the cytoplasm. In terms of biological role, together with the chaperonin GroEL, plays an essential role in assisting protein folding. The GroEL-GroES system forms a nano-cage that allows encapsulation of the non-native substrate proteins and provides a physical environment optimized to promote and accelerate protein folding. GroES binds to the apical surface of the GroEL ring, thereby capping the opening of the GroEL channel. This chain is Co-chaperonin GroES, found in Brevibacillus brevis (strain 47 / JCM 6285 / NBRC 100599).